Consider the following 356-residue polypeptide: Dihydroorotate dehydrogenase (quinone) (356 aa).

FMN-binding positions include 67–71 (AGFDK) and T91. K71 is a binding site for substrate. 116-120 (NRMGF) is a binding site for substrate. FMN contacts are provided by N153 and N186. N186 is a binding site for substrate. The active-site Nucleophile is S189. Residue N191 coordinates substrate. K228 and T256 together coordinate FMN. 257-258 (NT) provides a ligand contact to substrate. Residues G282, G311, and 332–333 (YT) contribute to the FMN site.

Belongs to the dihydroorotate dehydrogenase family. Type 2 subfamily. In terms of assembly, monomer. The cofactor is FMN.

Its subcellular location is the cell membrane. The enzyme catalyses (S)-dihydroorotate + a quinone = orotate + a quinol. Its pathway is pyrimidine metabolism; UMP biosynthesis via de novo pathway; orotate from (S)-dihydroorotate (quinone route): step 1/1. In terms of biological role, catalyzes the conversion of dihydroorotate to orotate with quinone as electron acceptor. The polypeptide is Dihydroorotate dehydrogenase (quinone) (Pseudarthrobacter chlorophenolicus (strain ATCC 700700 / DSM 12829 / CIP 107037 / JCM 12360 / KCTC 9906 / NCIMB 13794 / A6) (Arthrobacter chlorophenolicus)).